The following is a 190-amino-acid chain: Large ribosomal subunit protein bL25 (190 aa).

It belongs to the bacterial ribosomal protein bL25 family. CTC subfamily. In terms of assembly, part of the 50S ribosomal subunit; part of the 5S rRNA/L5/L18/L25 subcomplex. Contacts the 5S rRNA. Binds to the 5S rRNA independently of L5 and L18.

Its function is as follows. This is one of the proteins that binds to the 5S RNA in the ribosome where it forms part of the central protuberance. The protein is Large ribosomal subunit protein bL25 of Neisseria meningitidis serogroup A / serotype 4A (strain DSM 15465 / Z2491).